The primary structure comprises 120 residues: Putative B3 domain-containing protein At3g28853 (120 aa).

Positions 19 to 120 form a DNA-binding region, TF-B3; sequence INKRLTQSDV…DKSNEVFYII (102 aa).

It localises to the nucleus. The protein is Putative B3 domain-containing protein At3g28853 of Arabidopsis thaliana (Mouse-ear cress).